The sequence spans 648 residues: Macrolide export ATP-binding/permease protein MacB (648 aa).

Residues 5–243 form the ABC transporter domain; it reads LELCNVSRSY…QGVDAAVVNT (239 aa). ATP is bound at residue 41–48; it reads GVSGSGKS. A run of 5 helical transmembrane segments spans residues 273 to 293, 417 to 437, 523 to 543, 577 to 597, and 611 to 631; these read LLTM…VVVG, ANVV…IGVA, LFLT…VMNI, VLVC…IAFM, and LTAL…FGWL.

The protein belongs to the ABC transporter superfamily. Macrolide exporter (TC 3.A.1.122) family. Homodimer. Part of the tripartite efflux system MacAB-TolC, which is composed of an inner membrane transporter, MacB, a periplasmic membrane fusion protein, MacA, and an outer membrane component, TolC. The complex forms a large protein conduit and can translocate molecules across both the inner and outer membranes. Interacts with MacA.

It localises to the cell inner membrane. Part of the tripartite efflux system MacAB-TolC. MacB is a non-canonical ABC transporter that contains transmembrane domains (TMD), which form a pore in the inner membrane, and an ATP-binding domain (NBD), which is responsible for energy generation. Confers resistance against macrolides. The sequence is that of Macrolide export ATP-binding/permease protein MacB from Salmonella typhimurium (strain LT2 / SGSC1412 / ATCC 700720).